A 120-amino-acid polypeptide reads, in one-letter code: Large ribosomal subunit protein uL18 (120 aa).

It belongs to the universal ribosomal protein uL18 family. As to quaternary structure, part of the 50S ribosomal subunit; part of the 5S rRNA/L5/L18/L25 subcomplex. Contacts the 5S and 23S rRNAs.

Its function is as follows. This is one of the proteins that bind and probably mediate the attachment of the 5S RNA into the large ribosomal subunit, where it forms part of the central protuberance. The sequence is that of Large ribosomal subunit protein uL18 from Bartonella henselae (strain ATCC 49882 / DSM 28221 / CCUG 30454 / Houston 1) (Rochalimaea henselae).